Here is a 148-residue protein sequence, read N- to C-terminus: Holo-[acyl-carrier-protein] synthase (148 aa).

Residues D9 and E63 each contribute to the Mg(2+) site.

Belongs to the P-Pant transferase superfamily. AcpS family. Mg(2+) serves as cofactor.

Its subcellular location is the cytoplasm. The enzyme catalyses apo-[ACP] + CoA = holo-[ACP] + adenosine 3',5'-bisphosphate + H(+). Transfers the 4'-phosphopantetheine moiety from coenzyme A to a Ser of acyl-carrier-protein. This chain is Holo-[acyl-carrier-protein] synthase, found in Burkholderia cenocepacia (strain HI2424).